A 124-amino-acid chain; its full sequence is MPTFNQLVRKGRTAPKFKTASPALQSCPQKRGVCTRVYTQTPKKPNSALRKVARVRLTNGIEVTTYIPGIGHNLQEHSIVLIRGGRVKDLPGVRYHVVRGTLDSVGVANRKQGRSKYGAKRPKA.

Asp-89 bears the 3-methylthioaspartic acid mark.

It belongs to the universal ribosomal protein uS12 family. In terms of assembly, part of the 30S ribosomal subunit. Contacts proteins S8 and S17. May interact with IF1 in the 30S initiation complex.

Functionally, with S4 and S5 plays an important role in translational accuracy. Interacts with and stabilizes bases of the 16S rRNA that are involved in tRNA selection in the A site and with the mRNA backbone. Located at the interface of the 30S and 50S subunits, it traverses the body of the 30S subunit contacting proteins on the other side and probably holding the rRNA structure together. The combined cluster of proteins S8, S12 and S17 appears to hold together the shoulder and platform of the 30S subunit. The polypeptide is Small ribosomal subunit protein uS12 (Koribacter versatilis (strain Ellin345)).